A 117-amino-acid polypeptide reads, in one-letter code: Ribonuclease P protein component 4 (117 aa).

Zn(2+) is bound by residues C63, C66, C92, and C95.

The protein belongs to the eukaryotic/archaeal RNase P protein component 4 family. Consists of a catalytic RNA component and at least 4 protein subunits. Forms a subcomplex with Rnp1 which stimulates the catalytic RNA. The cofactor is Zn(2+).

The protein localises to the cytoplasm. The enzyme catalyses Endonucleolytic cleavage of RNA, removing 5'-extranucleotides from tRNA precursor.. Part of ribonuclease P, a protein complex that generates mature tRNA molecules by cleaving their 5'-ends. The RNA is catalytic, but its KM for pre-tRNA is 170-fold decreased in the presence of the 4 known protein subunits (Rnp1-4). The protein subunits also decrease the amount of Mg(2+) needed for activity. This chain is Ribonuclease P protein component 4, found in Pyrococcus furiosus (strain ATCC 43587 / DSM 3638 / JCM 8422 / Vc1).